The sequence spans 678 residues: Glycine--tRNA ligase beta subunit (678 aa).

Belongs to the class-II aminoacyl-tRNA synthetase family. As to quaternary structure, tetramer of two alpha and two beta subunits.

It is found in the cytoplasm. It catalyses the reaction tRNA(Gly) + glycine + ATP = glycyl-tRNA(Gly) + AMP + diphosphate. This Streptococcus pneumoniae (strain ATCC BAA-255 / R6) protein is Glycine--tRNA ligase beta subunit.